We begin with the raw amino-acid sequence, 1944 residues long: Anaphase-promoting complex subunit 1 (1944 aa).

4 positions are modified to phosphoserine: Ser-51, Ser-60, Ser-202, and Ser-286. A Phosphothreonine modification is found at Thr-291. The segment at 305–343 (LRSLSKGDSPVTSPFQNYSSIHSQSRSTSSPSLHSRSPS) is disordered. A phosphoserine mark is found at Ser-313, Ser-341, Ser-343, Ser-355, Ser-362, Ser-373, and Ser-377. Over residues 323-343 (SSIHSQSRSTSSPSLHSRSPS) the composition is skewed to low complexity. Residues 373–396 (SHNQSPKRHSISHSPNSNSNGSFL) are disordered. Over residues 384–394 (SHSPNSNSNGS) the composition is skewed to low complexity. Thr-537 is modified (phosphothreonine). Phosphoserine is present on residues Ser-547 and Ser-555. At Tyr-571 the chain carries Phosphotyrosine. A phosphoserine mark is found at Ser-686, Ser-688, and Ser-916. A disordered region spans residues 994–1016 (KGKSVLSSDVPSGTETEEEDDGM). Over residues 998-1007 (VLSSDVPSGT) the composition is skewed to polar residues. 4 PC repeats span residues 1297–1325 (AAGL…PEQL), 1366–1404 (GATL…PEFL), 1467–1501 (GACL…YLSA), and 1520–1552 (LLSL…EMNY).

The protein belongs to the APC1 family. In terms of assembly, the mammalian APC/C is composed at least of 14 distinct subunits ANAPC1, ANAPC2, CDC27/APC3, ANAPC4, ANAPC5, CDC16/APC6, ANAPC7, CDC23/APC8, ANAPC10, ANAPC11, CDC26/APC12, ANAPC13, ANAPC15 and ANAPC16 that assemble into a complex of at least 19 chains with a combined molecular mass of around 1.2 MDa; APC/C interacts with FZR1 and FBXO5. Phosphorylated. Phosphorylation on Ser-355 occurs specifically during mitosis.

It participates in protein modification; protein ubiquitination. Component of the anaphase promoting complex/cyclosome (APC/C), a cell cycle-regulated E3 ubiquitin ligase that controls progression through mitosis and the G1 phase of the cell cycle. The APC/C complex acts by mediating ubiquitination and subsequent degradation of target proteins: it mainly mediates the formation of 'Lys-11'-linked polyubiquitin chains and, to a lower extent, the formation of 'Lys-48'- and 'Lys-63'-linked polyubiquitin chains. The APC/C complex catalyzes assembly of branched 'Lys-11'-/'Lys-48'-linked branched ubiquitin chains on target proteins. This is Anaphase-promoting complex subunit 1 (ANAPC1) from Homo sapiens (Human).